Here is a 442-residue protein sequence, read N- to C-terminus: Putative toxin YopC (442 aa).

In the C-terminal section; belongs to the MbcT/ParT/Res family. Forms a complex with cognate antitoxin YopB.

Its function is as follows. May be the toxic component of a type II toxin-antitoxin (TA) system. Neutralized by its cognate antitoxin YopB. The protein is Putative toxin YopC (yopC) of Bacillus subtilis (strain 168).